A 603-amino-acid chain; its full sequence is Serine/threonine-protein kinase PLK1 (603 aa).

Residues 1–15 (MNAAAKAGKLARAPA) are compositionally biased toward low complexity. The disordered stretch occupies residues 1–32 (MNAAAKAGKLARAPADLGKGGVPGDAAPGAPG). A Glycyl lysine isopeptide (Lys-Gly) (interchain with G-Cter in ubiquitin) cross-link involves residue Lys-19. Residues 53–305 (YVRGRFLGKG…IHELLNDEFF (253 aa)) enclose the Protein kinase domain. ATP is bound by residues 59-67 (LGKGGFAKC) and Lys-82. Ser-103 is modified (phosphoserine). Glu-131 contributes to the ATP binding site. Ser-137 carries the phosphoserine modification. The active-site Proton acceptor is Asp-176. Residues 178–181 (KLGN) and Asp-194 each bind ATP. Positions 194–221 (DFGLATKVEYEGERKKTLCGTPNYIAPE) are activation loop. Thr-210 is modified (phosphothreonine; by AURKA). The residue at position 214 (Thr-214) is a Phosphothreonine. A phosphoserine; by autocatalysis mark is found at Ser-269 and Ser-335. Residues 337-340 (RKPL) carry the D-box that targets the protein for proteasomal degradation in anaphase motif. A Glycyl lysine isopeptide (Lys-Gly) (interchain with G-Cter in SUMO2) cross-link involves residue Lys-338. Residues 338–361 (KPLTVLNKGVENPLPDRPREKEEP) form a disordered region. Basic and acidic residues predominate over residues 351–361 (LPDRPREKEEP). Residues Ser-375 and Ser-450 each carry the phosphoserine modification. One can recognise a POLO box 1 domain in the interval 410-488 (WVSKWVDYSD…LNYFRNYMSE (79 aa)). Lys-492 is covalently cross-linked (Glycyl lysine isopeptide (Lys-Gly) (interchain with G-Cter in ubiquitin)). A linker region spans residues 493-507 (AGANITPREGDELAR). Thr-498 carries the phosphothreonine modification. A POLO box 2 domain is found at 510-592 (YLRTWFRTRS…ARTMVDKLLS (83 aa)). The tract at residues 538–540 (HTK) is important for interaction with phosphorylated proteins.

It belongs to the protein kinase superfamily. Ser/Thr protein kinase family. CDC5/Polo subfamily. Interacts with CEP170 and EVI5. Interacts and phosphorylates ERCC6L. Interacts with FAM29A. Interacts with SLX4/BTBD12 and TTDN1. Interacts with BUB1B. Interacts (via POLO-box domain) with the phosphorylated form of BUB1, CENPU and CDC25C. Interacts with isoform 3 of SGO1. Interacts with BORA, KIF2A and AURKA. Interacts with TOPORS and CYLD. Interacts with ECT2; the interaction is stimulated upon phosphorylation of ECT2 on 'Thr-444'. Interacts with PRC1. Interacts with KIF20A/MKLP2 (when phosphorylated), leading to the recruitment at the central spindle. Interacts (via POLO box domains) with PPP1R12A/MYPT1 (when previously phosphorylated by CDK1). Part of an astrin (SPAG5)-kinastrin (SKAP) complex containing KNSTRN, SPAG5, PLK1, DYNLL1 and SGO2. Interacts with BIRC6/bruce. Interacts with CDK1-phosphorylated FRY; this interaction occurs in mitotic cells, but not in interphase cells. FRY interaction facilitates AURKA-mediated PLK1 phosphorylation. Interacts with CDK1-phosphorylated DCTN6 during mitotic prometaphase; the interaction facilitates recruitment to kinetochores. Interacts with CEP68; the interaction phosphorylates CEP68. Interacts (via POLO-box domain) with DCTN1. Interacts with CEP20 in later G1, S, G2 and M phases of the cell cycle; this interaction recruits PLK1 to centrosomes, a step required for S phase progression. Interacts with HSF1; this interaction increases upon heat shock but does not modulate neither HSF1 homotrimerization nor DNA-binding activities. Interacts with HNRNPU; this interaction induces phosphorylation of HNRNPU in mitosis. Interacts (via its N-terminus) with RIOK2. Interacts with KLHL22. Interacts (via POLO box domains) with NEDD9/HEF1 (via C-terminus). Interacts (via RVxF motif) with FIRRM; regulates PLK1 kinase activity. Interacts with SKA3; the interaction promotes the stability of PLK1. Interacts with the MTMR3:MTMR4 heterooligomer; brings CEP55 and PLK1 together during early mitosis, regulating the phosphorylation of CEP55 by PLK1 and its recruitment to the midbody where it can mediate cell abscission. In terms of processing, catalytic activity is enhanced by phosphorylation of Thr-210. Phosphorylation at Thr-210 is first detected on centrosomes in the G2 phase of the cell cycle, peaks in prometaphase and gradually disappears from centrosomes during anaphase. Dephosphorylation at Thr-210 at centrosomes is probably mediated by protein phosphatase 1C (PP1C), via interaction with PPP1R12A/MYPT1. Autophosphorylation and phosphorylation of Ser-137 may not be significant for the activation of PLK1 during mitosis, but may enhance catalytic activity during recovery after DNA damage checkpoint. Phosphorylated in vitro by STK10. Post-translationally, ubiquitinated by the anaphase promoting complex/cyclosome (APC/C) in anaphase and following DNA damage, leading to its degradation by the proteasome. Ubiquitination is mediated via its interaction with FZR1/CDH1. Ubiquitination and subsequent degradation prevents entry into mitosis and is essential to maintain an efficient G2 DNA damage checkpoint. Monoubiquitination at Lys-492 by the BCR(KLHL22) ubiquitin ligase complex does not lead to degradation: it promotes PLK1 dissociation from phosphoreceptor proteins and subsequent removal from kinetochores, allowing silencing of the spindle assembly checkpoint (SAC) and chromosome segregation.

It is found in the nucleus. Its subcellular location is the chromosome. The protein localises to the centromere. It localises to the kinetochore. The protein resides in the cytoplasm. It is found in the cytoskeleton. Its subcellular location is the microtubule organizing center. The protein localises to the centrosome. It localises to the spindle. The protein resides in the midbody. The catalysed reaction is L-seryl-[protein] + ATP = O-phospho-L-seryl-[protein] + ADP + H(+). It carries out the reaction L-threonyl-[protein] + ATP = O-phospho-L-threonyl-[protein] + ADP + H(+). Activated by phosphorylation of Thr-210 by AURKA; phosphorylation by AURKA is enhanced by BORA. Once activated, activity is stimulated by binding target proteins. Binding of target proteins has no effect on the non-activated kinase. Several inhibitors targeting PLKs are currently in development and are under investigation in a growing number of clinical trials, such as BI 2536, an ATP-competitive PLK1 inhibitor or BI 6727, a dihydropteridinone that specifically inhibits the catalytic activity of PLK1. In terms of biological role, serine/threonine-protein kinase that performs several important functions throughout M phase of the cell cycle, including the regulation of centrosome maturation and spindle assembly, the removal of cohesins from chromosome arms, the inactivation of anaphase-promoting complex/cyclosome (APC/C) inhibitors, and the regulation of mitotic exit and cytokinesis. Polo-like kinase proteins act by binding and phosphorylating proteins that are already phosphorylated on a specific motif recognized by the POLO box domains. Phosphorylates BORA, BUB1B/BUBR1, CCNB1, CDC25C, CEP55, ECT2, ERCC6L, FBXO5/EMI1, FOXM1, KIF20A/MKLP2, CENPU, NEDD1, NINL, NPM1, NUDC, PKMYT1/MYT1, KIZ, PPP1R12A/MYPT1, PRC1, RACGAP1/CYK4, RHNO1, SGO1, STAG2/SA2, TEX14, TOPORS, p73/TP73, TPT1, WEE1 and HNRNPU. Plays a key role in centrosome functions and the assembly of bipolar spindles by phosphorylating KIZ, NEDD1 and NINL. NEDD1 phosphorylation promotes subsequent targeting of the gamma-tubulin ring complex (gTuRC) to the centrosome, an important step for spindle formation. Phosphorylation of NINL component of the centrosome leads to NINL dissociation from other centrosomal proteins. Involved in mitosis exit and cytokinesis by phosphorylating CEP55, ECT2, KIF20A/MKLP2, CENPU, PRC1 and RACGAP1. Recruited at the central spindle by phosphorylating and docking PRC1 and KIF20A/MKLP2; creates its own docking sites on PRC1 and KIF20A/MKLP2 by mediating phosphorylation of sites subsequently recognized by the POLO box domains. Phosphorylates RACGAP1, thereby creating a docking site for the Rho GTP exchange factor ECT2 that is essential for the cleavage furrow formation. Promotes the central spindle recruitment of ECT2. Plays a central role in G2/M transition of mitotic cell cycle by phosphorylating CCNB1, CDC25C, FOXM1, CENPU, PKMYT1/MYT1, PPP1R12A/MYPT1 and WEE1. Part of a regulatory circuit that promotes the activation of CDK1 by phosphorylating the positive regulator CDC25C and inhibiting the negative regulators WEE1 and PKMYT1/MYT1. Also acts by mediating phosphorylation of cyclin-B1 (CCNB1) on centrosomes in prophase. Phosphorylates FOXM1, a key mitotic transcription regulator, leading to enhance FOXM1 transcriptional activity. Involved in kinetochore functions and sister chromatid cohesion by phosphorylating BUB1B/BUBR1, FBXO5/EMI1 and STAG2/SA2. PLK1 is high on non-attached kinetochores suggesting a role of PLK1 in kinetochore attachment or in spindle assembly checkpoint (SAC) regulation. Required for kinetochore localization of BUB1B. Regulates the dissociation of cohesin from chromosomes by phosphorylating cohesin subunits such as STAG2/SA2. Phosphorylates SGO1: required for spindle pole localization of isoform 3 of SGO1 and plays a role in regulating its centriole cohesion function. Mediates phosphorylation of FBXO5/EMI1, a negative regulator of the APC/C complex during prophase, leading to FBXO5/EMI1 ubiquitination and degradation by the proteasome. Acts as a negative regulator of p53 family members: phosphorylates TOPORS, leading to inhibit the sumoylation of p53/TP53 and simultaneously enhance the ubiquitination and subsequent degradation of p53/TP53. Phosphorylates the transactivation domain of the transcription factor p73/TP73, leading to inhibit p73/TP73-mediated transcriptional activation and pro-apoptotic functions. Phosphorylates BORA, and thereby promotes the degradation of BORA. Contributes to the regulation of AURKA function. Also required for recovery after DNA damage checkpoint and entry into mitosis. Phosphorylates MISP, leading to stabilization of cortical and astral microtubule attachments required for proper spindle positioning. Together with MEIKIN, acts as a regulator of kinetochore function during meiosis I: required both for mono-orientation of kinetochores on sister chromosomes and protection of centromeric cohesin from separase-mediated cleavage. Phosphorylates CEP68 and is required for its degradation. Regulates nuclear envelope breakdown during prophase by phosphorylating DCTN1 resulting in its localization in the nuclear envelope. Phosphorylates the heat shock transcription factor HSF1, promoting HSF1 nuclear translocation upon heat shock. Phosphorylates HSF1 also in the early mitotic period; this phosphorylation regulates HSF1 localization to the spindle pole, the recruitment of the SCF(BTRC) ubiquitin ligase complex induicing HSF1 degradation, and hence mitotic progression. Regulates mitotic progression by phosphorylating RIOK2. Through the phosphorylation of DZIP1 regulates the localization during mitosis of the BBSome, a ciliary protein complex involved in cilium biogenesis. Regulates DNA repair during mitosis by mediating phosphorylation of POLQ and RHNO1, thereby promoting POLQ recruitment to DNA damage sites. Phosphorylates ATXN10 which may play a role in the regulation of cytokinesis and may stimulate the proteasome-mediated degradation of ATXN10. The polypeptide is Serine/threonine-protein kinase PLK1 (Plk1) (Rattus norvegicus (Rat)).